A 196-amino-acid polypeptide reads, in one-letter code: Small ribosomal subunit protein uS4c (196 aa).

The segment at 17 to 36 (ALPGLTRKTPKSGSNLKKKF) is disordered. The region spanning 89 to 157 (MRLDNILFRL…VQNYIASSDP (69 aa)) is the S4 RNA-binding domain.

Belongs to the universal ribosomal protein uS4 family. Part of the 30S ribosomal subunit. Contacts protein S5. The interaction surface between S4 and S5 is involved in control of translational fidelity.

It localises to the plastid. It is found in the chloroplast. Functionally, one of the primary rRNA binding proteins, it binds directly to 16S rRNA where it nucleates assembly of the body of the 30S subunit. Its function is as follows. With S5 and S12 plays an important role in translational accuracy. The chain is Small ribosomal subunit protein uS4c (rps4) from Calamagrostis epigeios (Wood small-reed grass).